Consider the following 76-residue polypeptide: ATP synthase subunit 9, mitochondrial (76 aa).

Met-1 is subject to N-formylmethionine. 2 helical membrane-spanning segments follow: residues 14-34 (IATIGLTGAGIGIAIVFAALI) and 52-72 (ILGFALSEATGLFCLMISFLL).

In terms of assembly, F-type ATP synthases have 2 components, the catalytic core F(1) and the membrane-embedded component F(0), linked together by a central stalk and a peripheral stalk. The central stalk, also called rotor shaft, is often seen as part of F(1). The peripheral stalk is seen as part of F(0). F(0) contains the membrane channel next to the rotor. F-type ATP synthases form dimers but each monomer functions independently in ATP generation. The dimer consists of 18 different polypeptides: ATP1 (subunit alpha, part of F(1), 3 molecules per monomer), ATP2 (subunit beta, part of F(1), 3 molecules per monomer), ATP3 (subunit gamma, part of the central stalk), ATP4 (subunit b, part of the peripheral stalk), ATP5/OSCP (subunit 5/OSCP, part of the peripheral stalk), ATP6 (subunit a, part of the peripheral stalk), ATP7 (subunit d, part of the peripheral stalk), ATP8 (subunit 8, part of the peripheral stalk), OLI1 (subunit c, part of the rotor, 10 molecules per monomer), ATP14 (subunit h, part of the peripheral stalk), ATP15 (subunit epsilon, part of the central stalk), ATP16 (subunit delta, part of the central stalk), ATP17 (subunit f, part of the peripheral stalk), ATP18 (subunit i/j, part of the peripheral stalk). Dimer-specific subunits are ATP19 (subunit k, at interface between monomers), ATP20 (subunit g, at interface between monomers), TIM11 (subunit e, at interface between monomers). Also contains subunit L.

Its subcellular location is the mitochondrion inner membrane. In terms of biological role, mitochondrial membrane ATP synthase (F(1)F(0) ATP synthase or Complex V) produces ATP from ADP in the presence of a proton gradient across the membrane which is generated by electron transport complexes of the respiratory chain. F-type ATP synthases consist of two structural domains, F(1) - containing the extramembraneous catalytic core, and F(0) - containing the membrane proton channel, linked together by a central stalk and a peripheral stalk. During catalysis, ATP synthesis in the catalytic domain of F(1) is coupled via a rotary mechanism of the central stalk subunits to proton translocation. Part of the complex F(0) domain. A homomeric c-ring of 10 OLI1/ATP9 subunits is part of the complex rotary element. The polypeptide is ATP synthase subunit 9, mitochondrial (Pichia angusta (Yeast)).